Consider the following 83-residue polypeptide: MRKGTVKEVLAKIKYDPRENENDYYLIIEHRGDYGNVKKIPVNLIELGHGYFFVGETQIPYHRILKVVRKDGRVIWESRKIRK.

It belongs to the UPF0248 family.

This is UPF0248 protein PH1212.1 from Pyrococcus horikoshii (strain ATCC 700860 / DSM 12428 / JCM 9974 / NBRC 100139 / OT-3).